The chain runs to 279 residues: Probable phosphatase phospho1 (279 aa).

Catalysis depends on Asp41, which acts as the Nucleophile. Mg(2+)-binding residues include Asp41 and Asp43. The active-site Proton donor is the Asp43. Substrate contacts are provided by Asp52 and Asp133. Mg(2+) is bound at residue Asp215.

Belongs to the HAD-like hydrolase superfamily. PHOSPHO family. Requires Mg(2+) as cofactor.

It localises to the extracellular vesicle. The enzyme catalyses phosphoethanolamine + H2O = ethanolamine + phosphate. The catalysed reaction is phosphocholine + H2O = choline + phosphate. Phosphatase that has a high activity toward phosphoethanolamine (PEA) and phosphocholine (PCho). Involved in the generation of inorganic phosphate for bone mineralization. In Danio rerio (Zebrafish), this protein is Probable phosphatase phospho1 (phospho1).